The primary structure comprises 332 residues: MTENNEETIVPDEQCNLTSSTPMKSSDLENVESPIERKISIVECDGEGNPPIESSEETPPDLTSHSVAPRRRRSPRRPEVSASRLPLKVLNQIFQYLSLKDLRSAMLTCHSWNNALSMEDSDIWQQLLVQKLPEAAHSDPFLFVELRSARKKLRAWYFAWNTNDISRNNYIRTNGFTVHRQPVAQSTDGVRGKRGVSQGVHAFDITWDGPLGTVAVVGFATKHAALHCVGYIALLGSDDQSWGWNLVDNVLMHNGVQLGVYPKMNNPPKYEVGEKIRLVIDCDMHVAYFERNSEFLGIAFSHIPPLRLFPAVCAVYGNTEVTMVYVGSPQMG.

Over residues 1–10 (MTENNEETIV) the composition is skewed to acidic residues. Positions 1–81 (MTENNEETIV…RRSPRRPEVS (81 aa)) are disordered. Positions 15–24 (CNLTSSTPMK) are enriched in polar residues. The F-box domain occupies 79 to 127 (EVSASRLPLKVLNQIFQYLSLKDLRSAMLTCHSWNNALSMEDSDIWQQL). A B30.2/SPRY domain is found at 138 to 330 (SDPFLFVELR…VTMVYVGSPQ (193 aa)).

It belongs to the FBXO45/Fsn family. In terms of assembly, component of an SCF (SKP1-CUL1-F-box protein) E3 ubiquitin ligase complex composed of cul-1, fsn-1, rpm-1 and skr-1. Interacts (via SPRY domain) with scd-2 (via cytoplasmic domain). Interacts (via SPRY domain) with convertase egl-3 (via C-terminus).

The protein resides in the synapse. Its pathway is protein modification; protein ubiquitination. Its function is as follows. Component of a SCF (SKP1-CUL1-F-box protein) E3 ubiquitin ligase complex which is required for the restriction and/or maturation of synapses in GABAergic neuromuscular junction (NMJ) presynaptic neurons. Promotes NRJ synapse development and synaptic transmission by negatively regulating the daf-2/InsR pathway in muscles. By targeting convertase egl-3 for degradation, negatively modulates insulin-like protein ins-4 and ins-6 processing. May stabilize synapse formation by promoting the down-regulation of scd-2. Regulates axon termination in PLM and ALM neurons. This is F-box/SPRY domain-containing protein 1 (fsn-1) from Caenorhabditis briggsae.